The following is a 461-amino-acid chain: Alcaligin biosynthesis enzyme (461 aa).

9–15 is an FAD binding site; it reads VAIGIGP.

This sequence belongs to the lysine N(6)-hydroxylase/L-ornithine N(5)-oxygenase family. It depends on FAD as a cofactor.

It functions in the pathway siderophore biosynthesis; alcaligin biosynthesis. The polypeptide is Alcaligin biosynthesis enzyme (alcA) (Bordetella parapertussis (strain 12822 / ATCC BAA-587 / NCTC 13253)).